We begin with the raw amino-acid sequence, 152 residues long: Deoxyuridine 5'-triphosphate nucleotidohydrolase (152 aa).

Residues 71–73 (RSG), Asn84, 88–90 (LID), and Met98 contribute to the substrate site.

Belongs to the dUTPase family. It depends on Mg(2+) as a cofactor.

The catalysed reaction is dUTP + H2O = dUMP + diphosphate + H(+). It participates in pyrimidine metabolism; dUMP biosynthesis; dUMP from dCTP (dUTP route): step 2/2. Its function is as follows. This enzyme is involved in nucleotide metabolism: it produces dUMP, the immediate precursor of thymidine nucleotides and it decreases the intracellular concentration of dUTP so that uracil cannot be incorporated into DNA. In Photorhabdus laumondii subsp. laumondii (strain DSM 15139 / CIP 105565 / TT01) (Photorhabdus luminescens subsp. laumondii), this protein is Deoxyuridine 5'-triphosphate nucleotidohydrolase.